The chain runs to 52 residues: Large ribosomal subunit protein bL33 (52 aa).

The protein belongs to the bacterial ribosomal protein bL33 family.

This is Large ribosomal subunit protein bL33 from Helicobacter acinonychis (strain Sheeba).